Consider the following 858-residue polypeptide: GDP-fucose protein O-fucosyltransferase 2 (858 aa).

At 1 to 150 the chain is on the cytoplasmic side; that stretch reads MHCQLGGQAR…RPPCLLNHRR (150 aa). Residues 151-171 form a helical; Signal-anchor for type II membrane protein membrane-spanning segment; it reads LLLGLVSVLTVFLSCLPFTNA. The Lumenal portion of the chain corresponds to 172–858; the sequence is TVSPAALQDV…WPSLDPSSTL (687 aa). Residue 237–241 coordinates GDP-beta-L-fucose; that stretch reads GEGFH. Glutamate 238 serves as the catalytic Proton acceptor. The segment at 448–510 is disordered; sequence AALTPQERQR…SRSRKEIQEE (63 aa). Basic and acidic residues predominate over residues 486-510; that stretch reads DGEREKRKPGRRSDTSRSRKEIQEE. Residues 646 to 648 and 787 to 788 each bind GDP-beta-L-fucose; these read HLR and RF. Positions 819–858 are disordered; that stretch reads TGGQAQGKCFATKSHDPPEGRSRSELRRKYWPSLDPSSTL. The span at 831–846 shows a compositional bias: basic and acidic residues; sequence KSHDPPEGRSRSELRR.

The protein belongs to the glycosyltransferase 68 family.

Its subcellular location is the endoplasmic reticulum membrane. It catalyses the reaction L-seryl-[protein] + GDP-beta-L-fucose = 3-O-(alpha-L-fucosyl)-L-seryl-[protein] + GDP + H(+). The enzyme catalyses L-threonyl-[protein] + GDP-beta-L-fucose = 3-O-(alpha-L-fucosyl)-L-threonyl-[protein] + GDP + H(+). It functions in the pathway protein modification; protein glycosylation. In terms of biological role, catalyzes the reaction that attaches fucose through an O-glycosidic linkage to a conserved serine or threonine residue in the consensus sequence C1-X-X-S/T-C2 of thrombospondin type I repeats (TSRs) where C1 and C2 are the first and second cysteines of the repeat, respectively. O-fucosylates microneme protein MIC2 and may play a role in its stabilization. Probably by regulating protein O-fucosylation, may play a role in tachyzoite adhesion to and/or invasion of host cells; however, POFUT2 involvement in adhesion/invasion is controversial. The polypeptide is GDP-fucose protein O-fucosyltransferase 2 (Toxoplasma gondii (strain ATCC 50853 / GT1)).